Reading from the N-terminus, the 314-residue chain is Nodulation protein D 1 (314 aa).

In terms of domain architecture, HTH lysR-type spans 6–63 (LDLNLLVALDALMTERNLTAAARKIHLSQPAMSAAVARLRTYFGDELFTMRGRELVPT). Positions 23–42 (LTAAARKIHLSQPAMSAAVA) form a DNA-binding region, H-T-H motif.

This sequence belongs to the LysR transcriptional regulatory family.

In terms of biological role, nodD regulates the expression of the nodABCFE genes which encode other nodulation proteins. NodD is also a negative regulator of its own expression. Binds flavonoids as inducers. The chain is Nodulation protein D 1 (nodD1) from Bradyrhizobium sp. (strain NC92).